The sequence spans 178 residues: Protein GrpE (178 aa).

Residues 1–11 (MSENQNPPPSP) are compositionally biased toward pro residues. Residues 1–23 (MSENQNPPPSPEEIEAAMSANAA) are disordered.

Belongs to the GrpE family. As to quaternary structure, homodimer.

It is found in the cytoplasm. Its function is as follows. Participates actively in the response to hyperosmotic and heat shock by preventing the aggregation of stress-denatured proteins, in association with DnaK and GrpE. It is the nucleotide exchange factor for DnaK and may function as a thermosensor. Unfolded proteins bind initially to DnaJ; upon interaction with the DnaJ-bound protein, DnaK hydrolyzes its bound ATP, resulting in the formation of a stable complex. GrpE releases ADP from DnaK; ATP binding to DnaK triggers the release of the substrate protein, thus completing the reaction cycle. Several rounds of ATP-dependent interactions between DnaJ, DnaK and GrpE are required for fully efficient folding. This chain is Protein GrpE, found in Acidovorax sp. (strain JS42).